The chain runs to 417 residues: Cobalamin binding intrinsic factor (417 aa).

The first 18 residues, 1 to 18 (MAWFALYLLSLLWATAGT), serve as a signal peptide directing secretion. Cystine bridges form between Cys-26–Cys-246, Cys-103–Cys-288, and Cys-143–Cys-182. Asp-171 contacts cob(II)alamin. The residue at position 191 (Ser-191) is a Phosphoserine. The cob(II)alamin site is built by Asp-222 and Gln-270. Residues Asn-311, Asn-330, and Asn-334 are each glycosylated (N-linked (GlcNAc...) asparagine). Cob(II)alamin is bound by residues 365-370 (SWGLVV) and 386-395 (WQFLSGVTPL). Residue Asn-413 is glycosylated (N-linked (GlcNAc...) asparagine).

Belongs to the eukaryotic cobalamin transport proteins family. In terms of assembly, interacts with CUBN (via CUB domains). In terms of tissue distribution, gastric mucosa.

Its subcellular location is the secreted. Promotes absorption of the essential vitamin cobalamin (Cbl) in the ileum. After interaction with CUBN, the CBLIF-cobalamin complex is internalized via receptor-mediated endocytosis. This is Cobalamin binding intrinsic factor from Homo sapiens (Human).